The primary structure comprises 259 residues: tRNA pseudouridine synthase A (259 aa).

Aspartate 51 functions as the Nucleophile in the catalytic mechanism. Tyrosine 109 contacts substrate.

It belongs to the tRNA pseudouridine synthase TruA family. In terms of assembly, homodimer.

The enzyme catalyses uridine(38/39/40) in tRNA = pseudouridine(38/39/40) in tRNA. Formation of pseudouridine at positions 38, 39 and 40 in the anticodon stem and loop of transfer RNAs. This Colwellia psychrerythraea (strain 34H / ATCC BAA-681) (Vibrio psychroerythus) protein is tRNA pseudouridine synthase A.